The primary structure comprises 228 residues: Aquaporin Z 2 (228 aa).

The next 2 membrane-spanning stretches (helical) occupy residues 9–29 (FFGT…AAAF) and 34–54 (IGFT…AYAV). Positions 63–65 (NPA) match the NPA 1 motif. A run of 3 helical transmembrane segments spans residues 82–102 (VPYV…LYVI), 129–149 (LVSA…VILG), and 158–178 (GFAP…SIPV). An NPA 2 motif is present at residues 184–186 (NPA). A helical transmembrane segment spans residues 204–224 (WLFWLAPIVGGAAGAVIWKLF).

It belongs to the MIP/aquaporin (TC 1.A.8) family. In terms of assembly, homotetramer.

It is found in the cell inner membrane. The enzyme catalyses H2O(in) = H2O(out). Functionally, channel that permits osmotically driven movement of water in both directions. It is involved in the osmoregulation and in the maintenance of cell turgor during volume expansion in rapidly growing cells. It mediates rapid entry or exit of water in response to abrupt changes in osmolarity. This is Aquaporin Z 2 from Agrobacterium fabrum (strain C58 / ATCC 33970) (Agrobacterium tumefaciens (strain C58)).